The primary structure comprises 303 residues: Uracil phosphoribosyltransferase (303 aa).

Residues 1–86 (MHIIMKTILA…RYVSSTPTDS (86 aa)) form a unknown region. A UPRTase region spans residues 87–303 (LSSKPLAAVY…DRLCGTSNPS (217 aa)). Residues Arg-170, Arg-195, and 222 to 230 (DPMLATGGS) contribute to the 5-phospho-alpha-D-ribose 1-diphosphate site. Uracil contacts are provided by residues Ile-285 and 290 to 292 (GDA). Asp-291 serves as a coordination point for 5-phospho-alpha-D-ribose 1-diphosphate.

It belongs to the UPRTase family. The cofactor is Mg(2+).

The catalysed reaction is UMP + diphosphate = 5-phospho-alpha-D-ribose 1-diphosphate + uracil. Its pathway is pyrimidine metabolism; UMP biosynthesis via salvage pathway; UMP from uracil: step 1/1. Its activity is regulated as follows. Allosterically activated by GTP. In terms of biological role, catalyzes the conversion of uracil and 5-phospho-alpha-D-ribose 1-diphosphate (PRPP) to UMP and diphosphate. In Chlamydia muridarum (strain MoPn / Nigg), this protein is Uracil phosphoribosyltransferase (upp).